Consider the following 477-residue polypeptide: Mitochondrial adenyl nucleotide antiporter SLC25A24 (477 aa).

Residues 1–173 (MLRWLRGFVL…RFWKHSTGID (173 aa)) form a regulatory N-terminal domain region. Residues 1 to 197 (MLRWLRGFVL…EKKSGQWWRQ (197 aa)) lie on the Mitochondrial intermembrane side of the membrane. EF-hand domains follow at residues 19-54 (EPPT…LGIP), 61-85 (EKIF…KYLK), 86-121 (DHEK…LGLT), and 122-157 (ISEQ…NPVT). D32, N34, D36, V38, E43, D68, N70, D72, K74, E79, D99, N101, D103, K105, E110, D135, D137, T139, T141, and E146 together coordinate Ca(2+). The interval 159–168 (IEEIIRFWKH) is linker region. Residues 174 to 477 (IGDSLTIPDE…MKQTLGVTQK (304 aa)) are C-terminal transmembrane transporter domain. Solcar repeat units lie at residues 192-278 (GQWW…YKKL), 286-371 (IGTF…LKSH), and 383-471 (PGVM…MKQT). Residues 198 to 215 (LLAGGVAGAVSRTSTAPL) traverse the membrane as a helical segment. Over 216 to 252 (DRLKVMMQVHGSKSAKMNIYGGFQQMVKEGGIRSLWR) the chain is Mitochondrial matrix. The chain crosses the membrane as a helical span at residues 253–272 (GNGTNVIKIAPETAVKFWAY). Residues 273 to 295 (EQYKKLLTEEGQKIGTFERFVSG) lie on the Mitochondrial intermembrane side of the membrane. Residues 296-309 (SMAGATAQTFIYPM) traverse the membrane as a helical segment. Residues 310–345 (EVLKTRLAVGKTGQYSGMFDCAKKILKYEGMGAFYK) are Mitochondrial matrix-facing. K320 carries the post-translational modification N6-acetyllysine; alternate. An N6-succinyllysine; alternate modification is found at K320. K336 bears the N6-acetyllysine mark. Residues 346–365 (GYVPNLLGIIPYAGIDLAVY) traverse the membrane as a helical segment. Residues 366–388 (ELLKSHWLDNFAKDSVNPGVMVL) lie on the Mitochondrial intermembrane side of the membrane. A helical membrane pass occupies residues 389–406 (LGCGALSSTCGQLASYPL). The Mitochondrial matrix portion of the chain corresponds to 407-445 (ALVRTRMQAQAMIEKSPQLNMVGLFRRILSKEGLPGLYR). K437 bears the N6-acetyllysine; alternate mark. K437 carries the post-translational modification N6-succinyllysine; alternate. A helical membrane pass occupies residues 446–465 (GITPNFMKVLPAVGISYVVY). At 466–477 (ENMKQTLGVTQK) the chain is on the mitochondrial intermembrane side.

The protein belongs to the mitochondrial carrier (TC 2.A.29) family. As to quaternary structure, monomer.

The protein resides in the mitochondrion inner membrane. It catalyses the reaction Mg(2+)(out) + phosphate(in) + ATP(out) = Mg(2+)(in) + phosphate(out) + ATP(in). The enzyme catalyses ADP(out) + phosphate(in) + H(+)(out) = ADP(in) + phosphate(out) + H(+)(in). It carries out the reaction AMP(out) + phosphate(in) = AMP(in) + phosphate(out). The catalysed reaction is phosphate(in) + ATP(out) + 2 H(+)(out) = phosphate(out) + ATP(in) + 2 H(+)(in). It catalyses the reaction dADP(in) + ADP(out) = dADP(out) + ADP(in). The enzyme catalyses Mg(2+)(in) + ADP(out) + ATP(in) + H(+)(out) = Mg(2+)(out) + ADP(in) + ATP(out) + H(+)(in). It carries out the reaction ADP(out) + diphosphate(in) = ADP(in) + diphosphate(out). The catalysed reaction is dAMP(in) + ADP(out) + H(+)(out) = dAMP(out) + ADP(in) + H(+)(in). It catalyses the reaction 3'-AMP(in) + ADP(out) + H(+)(out) = 3'-AMP(out) + ADP(in) + H(+)(in). The enzyme catalyses dAMP(out) + phosphate(in) = dAMP(in) + phosphate(out). It carries out the reaction 3'-AMP(out) + phosphate(in) = 3'-AMP(in) + phosphate(out). The catalysed reaction is dADP(out) + phosphate(in) + H(+)(out) = dADP(in) + phosphate(out) + H(+)(in). Activated by an increase in cytosolic calcium levels that induce a conformational change of the N-terminal regulatory domain, uncapping the channel and allowing transport. Inhibited by bathophenanthroline, mersalyl, p-hydroxymercuribenzoate, bromcresol purple and tannic acid. In terms of biological role, electroneutral antiporter that mediates the transport of adenyl nucleotides through the inner mitochondrial membrane. Originally identified as an ATP-magnesium/inorganic phosphate antiporter, it also acts as a broad specificity adenyl nucleotide antiporter. By regulating the mitochondrial matrix adenyl nucleotide pool could adapt to changing cellular energetic demands and indirectly regulate adenyl nucleotide-dependent metabolic pathways. In vitro, a low activity is also observed with guanyl and pyrimidine nucleotides. May play a role in protecting cells against oxidative stress-induced cell death, by buffering calcium levels in the mitochondrial matrix through the formation of calcium-phosphate precipitates. The sequence is that of Mitochondrial adenyl nucleotide antiporter SLC25A24 (SLC25A24) from Bos taurus (Bovine).